Consider the following 489-residue polypeptide: N-succinylglutamate 5-semialdehyde dehydrogenase (489 aa).

Residue 223-228 (GSSRTG) coordinates NAD(+). Active-site residues include E246 and C280.

It belongs to the aldehyde dehydrogenase family. AstD subfamily.

It catalyses the reaction N-succinyl-L-glutamate 5-semialdehyde + NAD(+) + H2O = N-succinyl-L-glutamate + NADH + 2 H(+). Its pathway is amino-acid degradation; L-arginine degradation via AST pathway; L-glutamate and succinate from L-arginine: step 4/5. Functionally, catalyzes the NAD-dependent reduction of succinylglutamate semialdehyde into succinylglutamate. This is N-succinylglutamate 5-semialdehyde dehydrogenase from Aeromonas hydrophila subsp. hydrophila (strain ATCC 7966 / DSM 30187 / BCRC 13018 / CCUG 14551 / JCM 1027 / KCTC 2358 / NCIMB 9240 / NCTC 8049).